The following is a 514-amino-acid chain: H/ACA ribonucleoprotein complex subunit DKC1 (514 aa).

An N-acetylalanine modification is found at A2. Positions 2–21 are nucleolar localization; the sequence is ADAEVIILPKKHKKKKERKS. A Glycyl lysine isopeptide (Lys-Gly) (interchain with G-Cter in SUMO2) cross-link involves residue K20. S21 is modified (phosphoserine). Residues K39 and K43 each participate in a glycyl lysine isopeptide (Lys-Gly) (interchain with G-Cter in SUMO2) cross-link. The Nucleophile role is filled by D125. Residue K191 forms a Glycyl lysine isopeptide (Lys-Gly) (interchain with G-Cter in SUMO2) linkage. Positions 296–371 constitute a PUA domain; the sequence is HKRLVMKDSA…IVAKIKRVIM (76 aa). S387 bears the Phosphoserine mark. K394 is covalently cross-linked (Glycyl lysine isopeptide (Lys-Gly) (interchain with G-Cter in SUMO2)). A Glycyl lysine isopeptide (Lys-Gly) (interchain with G-Cter in SUMO1); alternate cross-link involves residue K413. Residue K413 forms a Glycyl lysine isopeptide (Lys-Gly) (interchain with G-Cter in SUMO2); alternate linkage. Glycyl lysine isopeptide (Lys-Gly) (interchain with G-Cter in SUMO2) cross-links involve residues K424 and K433. A disordered region spans residues 443 to 514; the sequence is KTAKRKRESE…KAKEVELVSE (72 aa). Residues 446-514 form a nuclear and nucleolar localization region; the sequence is KRKRESESES…KAKEVELVSE (69 aa). Residues S451, S453, and S455 each carry the phosphoserine modification. Phosphothreonine is present on T458. K467 is covalently cross-linked (Glycyl lysine isopeptide (Lys-Gly) (interchain with G-Cter in SUMO2)). Residues 468–480 are compositionally biased toward basic residues; sequence KEKKKSKKDKKAK. 3 positions are modified to phosphoserine: S485, S494, and S513.

It belongs to the pseudouridine synthase TruB family. In terms of assembly, part of the H/ACA small nucleolar ribonucleoprotein (H/ACA snoRNP) complex, which contains NHP2/NOLA2, GAR1/NOLA1, NOP10/NOLA3, and DKC1/NOLA4, which is presumed to be the catalytic subunit. The complex contains a stable core formed by binding of one or two NOP10-DKC1 heterodimers to NHP2; GAR1 subsequently binds to this core via DKC1. The complex binds a box H/ACA small nucleolar RNA (snoRNA), which may target the specific site of modification within the RNA substrate. During assembly, the complex contains NAF1 instead of GAR1/NOLA1. The complex also interacts with TERC, which contains a 3'-terminal domain related to the box H/ACA snoRNAs. Specific interactions with snoRNAs or TERC are mediated by GAR1 and NHP2. Associates with NOLC1/NOPP140. H/ACA snoRNPs interact with the SMN complex, consisting of SMN1 or SMN2, GEMIN2/SIP1, DDX20/GEMIN3, and GEMIN4. This is mediated by interaction between GAR1 and SMN1 or SMN2. The SMN complex may be required for correct assembly of the H/ACA snoRNP complex. Component of the telomerase holoenzyme complex composed of one molecule of TERT, one molecule of WRAP53/TCAB1, two molecules of H/ACA ribonucleoprotein complex subunits DKC1, NOP10, NHP2 and GAR1, and a telomerase RNA template component (TERC). The telomerase holoenzyme complex is associated with TEP1, SMG6/EST1A and POT1. Interacts with SHQ1; this interaction may lead to the stabilization of DKC1, from the time of its synthesis until its association with NOP10, NHP2, and NAF1 at the nascent H/ACA RNA. Interacts with HMBOX1. Interacts with DHX36. Ubiquitously expressed.

It is found in the nucleus. Its subcellular location is the nucleolus. The protein resides in the cajal body. The protein localises to the cytoplasm. The catalysed reaction is uridine in 5S rRNA = pseudouridine in 5S rRNA. Its function is as follows. Catalytic subunit of H/ACA small nucleolar ribonucleoprotein (H/ACA snoRNP) complex, which catalyzes pseudouridylation of rRNA. This involves the isomerization of uridine such that the ribose is subsequently attached to C5, instead of the normal N1. Each rRNA can contain up to 100 pseudouridine ('psi') residues, which may serve to stabilize the conformation of rRNAs. Required for ribosome biogenesis and telomere maintenance. Also required for correct processing or intranuclear trafficking of TERC, the RNA component of the telomerase reverse transcriptase (TERT) holoenzyme. Functionally, promotes cell to cell and cell to substratum adhesion, increases the cell proliferation rate and leads to cytokeratin hyper-expression. The chain is H/ACA ribonucleoprotein complex subunit DKC1 from Homo sapiens (Human).